Reading from the N-terminus, the 168-residue chain is Cyclic pyranopterin monophosphate synthase (168 aa).

Residues 83 to 85 (LCH) and 121 to 122 (ME) each bind substrate. The active site involves Asp-136.

It belongs to the MoaC family. As to quaternary structure, homohexamer; trimer of dimers.

It catalyses the reaction (8S)-3',8-cyclo-7,8-dihydroguanosine 5'-triphosphate = cyclic pyranopterin phosphate + diphosphate. The protein operates within cofactor biosynthesis; molybdopterin biosynthesis. Functionally, catalyzes the conversion of (8S)-3',8-cyclo-7,8-dihydroguanosine 5'-triphosphate to cyclic pyranopterin monophosphate (cPMP). This Nostoc sp. (strain PCC 7120 / SAG 25.82 / UTEX 2576) protein is Cyclic pyranopterin monophosphate synthase.